The following is a 244-amino-acid chain: Transcription factor A, mitochondrial (244 aa).

A mitochondrion-targeting transit peptide spans 1–42 (MALFRGMWGVLRTLGRTGVEMCAGCGGRIPSPVSLICIPKCF). Positions 49–117 (PKKPMSSYLR…VYKEAVSKYK (69 aa)) form a DNA-binding region, HMG box 1. Residues Ser54, Ser55, and Ser60 each carry the phosphoserine; by PKA modification. Lys66 bears the N6-succinyllysine mark. Thr121 carries the post-translational modification Phosphothreonine. The segment at residues 154–218 (PKRPRSAYNI…RYDNEMKSWE (65 aa)) is a DNA-binding region (HMG box 2). Ser159 bears the Phosphoserine; by PKA mark. Ser192 carries the phosphoserine modification. The segment at 221–244 (MAEVGRSDLIRRSVKRPPGDISEN) is disordered.

In terms of assembly, monomer; binds DNA as a monomer. Homodimer. Component of the mitochondrial transcription initiation complex, composed at least of TFB2M, TFAM and POLRMT. In this complex TFAM recruits POLRMT to the promoter whereas TFB2M induces structural changes in POLRMT to enable promoter opening and trapping of the DNA non-template strand. Upon metabolic stress, forms a complex composed of FOXO3, SIRT3, TFAM and POLRMT. Interacts with TFB1M and TFB2M. Interacts with CLPX; this enhances DNA-binding. Post-translationally, phosphorylation by PKA within the HMG box 1 impairs DNA binding and promotes degradation by the AAA+ Lon protease. As to expression, the mitochondrial isoform is widely expressed while the nuclear isoform is testis-specific.

The protein resides in the mitochondrion. The protein localises to the mitochondrion matrix. It is found in the mitochondrion nucleoid. It localises to the nucleus. Binds to the mitochondrial light strand promoter and functions in mitochondrial transcription regulation. Component of the mitochondrial transcription initiation complex, composed at least of TFB2M, TFAM and POLRMT that is required for basal transcription of mitochondrial DNA. In this complex, TFAM recruits POLRMT to a specific promoter whereas TFB2M induces structural changes in POLRMT to enable promoter opening and trapping of the DNA non-template strand. Required for accurate and efficient promoter recognition by the mitochondrial RNA polymerase. Promotes transcription initiation from the HSP1 and the light strand promoter by binding immediately upstream of transcriptional start sites. Is able to unwind DNA. Bends the mitochondrial light strand promoter DNA into a U-turn shape via its HMG boxes. Required for maintenance of normal levels of mitochondrial DNA. May play a role in organizing and compacting mitochondrial DNA. In terms of biological role, may also function as a transcriptional activator or may have a structural role in the compaction of nuclear DNA during spermatogenesis. This chain is Transcription factor A, mitochondrial, found in Rattus norvegicus (Rat).